A 33-amino-acid polypeptide reads, in one-letter code: Vejocalcin (33 aa).

Intrachain disulfides connect Cys3-Cys17, Cys10-Cys21, and Cys16-Cys32. Residues 23-24 are essential for stimulation of [3H]ryanodine binding to RYR1; it reads RR.

Expressed by the venom gland.

Its subcellular location is the secreted. This toxin stabilizes ryanodine receptor 1 (RyR1) opening in a long-lasting subconductance state (60% of the full conductance state). Furthermore, it triggers calcium release from sarcoplasmic vesicles (31 nM are enough to induce a sharp release, and 65% of the total calcium is released after toxin (100 nM) addition) probably by acting as a cell-penetrating peptide (CPP). In addition, it has been shown to dose-dependently stimulate ryanodine binding to RyR1 (EC(50)=3.7 nM). It also augments the bell-shaped calcium-[3H]ryanodine binding curve that is maximal at about 10 uM calcium concentration. It binds a different site as ryanodine. It acts synergistically with caffeine. In vivo, intracerebroventricular injection into mice induces neurotoxic symptoms, followed by death. The chain is Vejocalcin from Vaejovis mexicanus (Mexican scorpion).